Consider the following 582-residue polypeptide: Acylamino-acid-releasing enzyme (582 aa).

Residues S445, D524, and H556 each act as charge relay system in the active site.

This sequence belongs to the peptidase S9C family.

The protein resides in the cytoplasm. The enzyme catalyses Cleavage of an N-acetyl or N-formyl amino acid from the N-terminus of a polypeptide.. In terms of biological role, this enzyme catalyzes the hydrolysis of the N-terminal peptide bond of an N-acetylated peptide to generate an N-acetylated amino acid and a peptide with a free N-terminus. This chain is Acylamino-acid-releasing enzyme, found in Aeropyrum pernix (strain ATCC 700893 / DSM 11879 / JCM 9820 / NBRC 100138 / K1).